We begin with the raw amino-acid sequence, 267 residues long: 5'-nucleotidase SurE (267 aa).

Positions 14, 15, 45, and 100 each coordinate a divalent metal cation.

It belongs to the SurE nucleotidase family. Requires a divalent metal cation as cofactor.

The protein localises to the cytoplasm. The catalysed reaction is a ribonucleoside 5'-phosphate + H2O = a ribonucleoside + phosphate. Its function is as follows. Nucleotidase that shows phosphatase activity on nucleoside 5'-monophosphates. The sequence is that of 5'-nucleotidase SurE from Methanosarcina acetivorans (strain ATCC 35395 / DSM 2834 / JCM 12185 / C2A).